The primary structure comprises 64 residues: Large ribosomal subunit protein bL35 (64 aa).

It belongs to the bacterial ribosomal protein bL35 family.

In Pelodictyon phaeoclathratiforme (strain DSM 5477 / BU-1), this protein is Large ribosomal subunit protein bL35.